The sequence spans 321 residues: 5,10-methylenetetrahydromethanopterin reductase (321 aa).

The protein belongs to the mer family. Homotetramer.

It localises to the cytoplasm. The enzyme catalyses 5-methyl-5,6,7,8-tetrahydromethanopterin + oxidized coenzyme F420-(gamma-L-Glu)(n) + H(+) = 5,10-methylenetetrahydromethanopterin + reduced coenzyme F420-(gamma-L-Glu)(n). It functions in the pathway one-carbon metabolism; methanogenesis from CO(2); methyl-coenzyme M from 5,10-methylene-5,6,7,8-tetrahydromethanopterin: step 1/2. Catalyzes the reversible reduction of methylene-H(4)MPT to methyl-H(4)MPT. This Methanothermobacter marburgensis (strain ATCC BAA-927 / DSM 2133 / JCM 14651 / NBRC 100331 / OCM 82 / Marburg) (Methanobacterium thermoautotrophicum) protein is 5,10-methylenetetrahydromethanopterin reductase.